Reading from the N-terminus, the 184-residue chain is Bifunctional protein PyrR (184 aa).

The PRPP-binding motif lies at 99-111 (IVLVDDVLYTGRT).

The protein belongs to the purine/pyrimidine phosphoribosyltransferase family. PyrR subfamily. Homodimer and homohexamer; in equilibrium.

It catalyses the reaction UMP + diphosphate = 5-phospho-alpha-D-ribose 1-diphosphate + uracil. In terms of biological role, regulates transcriptional attenuation of the pyrimidine nucleotide (pyr) operon by binding in a uridine-dependent manner to specific sites on pyr mRNA. This disrupts an antiterminator hairpin in the RNA and favors formation of a downstream transcription terminator, leading to a reduced expression of downstream genes. Functionally, also displays a weak uracil phosphoribosyltransferase activity which is not physiologically significant. This chain is Bifunctional protein PyrR, found in Acetivibrio thermocellus (strain ATCC 27405 / DSM 1237 / JCM 9322 / NBRC 103400 / NCIMB 10682 / NRRL B-4536 / VPI 7372) (Clostridium thermocellum).